The primary structure comprises 107 residues: Phosphoribosyl-ATP pyrophosphatase (107 aa).

The protein belongs to the PRA-PH family.

The protein resides in the cytoplasm. The enzyme catalyses 1-(5-phospho-beta-D-ribosyl)-ATP + H2O = 1-(5-phospho-beta-D-ribosyl)-5'-AMP + diphosphate + H(+). Its pathway is amino-acid biosynthesis; L-histidine biosynthesis; L-histidine from 5-phospho-alpha-D-ribose 1-diphosphate: step 2/9. The sequence is that of Phosphoribosyl-ATP pyrophosphatase from Bacillus cereus (strain ZK / E33L).